The following is a 1065-amino-acid chain: Ceruloplasmin (1065 aa).

Residues 1–19 (MKILILGIFLFLCSTPAWA) form the signal peptide. Plastocyanin-like domains are found at residues 20–200 (KEKH…LIIC) and 209–357 (KEKH…VQEC). The Na(+) site is built by Tyr-55, Gly-64, and Tyr-67. 2 residues coordinate Cu(2+): His-120 and His-122. O2 is bound at residue His-120. Position 128 (Lys-128) interacts with Ca(2+). N-linked (GlcNAc...) (complex) asparagine glycosylation is present at Asn-138. Residues Gln-143, Asp-146, and Asp-147 each contribute to the Ca(2+) site. Cys-174 and Cys-200 are disulfide-bonded. His-180 and His-182 together coordinate Cu(2+). His-180 contacts O2. Ser-256 is a Na(+) binding site. A disulfide bridge connects residues Cys-276 and Cys-357. Residues His-295, Cys-338, and His-343 each contribute to the Cu(2+) site. N-linked (GlcNAc...) (complex) asparagine glycosylation is found at Asn-358 and Asn-397. 2 consecutive Plastocyanin-like domains span residues 370–560 (HVRH…MKIC) and 570–718 (RQKD…VNQC). Na(+) contacts are provided by Phe-408, Gly-417, and Tyr-420. Residues Cys-534 and Cys-560 are joined by a disulfide bond. A glycan (N-linked (GlcNAc...) asparagine) is linked at Asn-588. Residue Ser-617 participates in Na(+) binding. Residues Cys-637 and Cys-718 are joined by a disulfide bond. Residues His-656, Cys-699, His-704, and Met-709 each contribute to the Cu(2+) site. Cys-699 acts as the Nucleophile; for glutathione peroxidase activity in catalysis. The residue at position 722 (Ser-722) is a Phosphoserine; by FAM20C. Plastocyanin-like domains follow at residues 730 to 900 (GERT…LIVC) and 908 to 1061 (FNPR…QNED). The N-linked (GlcNAc...) (complex) asparagine glycan is linked to Asn-762. Na(+) is bound by residues Phe-767, Gly-776, and Tyr-779. Cys-874 and Cys-900 are joined by a disulfide. Asn-926 carries N-linked (GlcNAc...) asparagine glycosylation. Ser-955 is a binding site for Na(+). Positions 994, 997, 999, 1039, 1040, 1041, 1045, and 1050 each coordinate Cu(2+). Residues His-997 and His-999 each contribute to the O2 site. His-1041 serves as a coordination point for O2.

This sequence belongs to the multicopper oxidase family. Found in a complex with MPO and LTF; interacts directly with MPO and LTF, which allows Fe(3+) incorporation into LTF, activation of CP ferroxidase activity and protection of CP antioxidant properties by MPO. It depends on Cu(2+) as a cofactor. In terms of tissue distribution, expressed by the liver and secreted in plasma.

The protein resides in the secreted. The enzyme catalyses 4 Fe(2+) + O2 + 4 H(+) = 4 Fe(3+) + 2 H2O. It catalyses the reaction 4 Cu(+) + O2 + 4 H(+) = 4 Cu(2+) + 2 H2O. The catalysed reaction is a hydroperoxide + 2 glutathione = an alcohol + glutathione disulfide + H2O. It carries out the reaction 4 nitric oxide + O2 + 2 H2O = 4 nitrite + 4 H(+). The enzyme catalyses 2 glutathione + H2O2 = glutathione disulfide + 2 H2O. Multifunctional blue, copper-binding (6-7 atoms per molecule) glycoprotein. It has ferroxidase activity oxidizing Fe(2+) to Fe(3+) without releasing radical oxygen species. It is involved in iron transport across the cell membrane. Copper ions provide a large number of enzymatic activites. Oxidizes highly toxic ferrous ions to the ferric state for further incorporation onto apo-transferrins, catalyzes Cu(+) oxidation and promotes the oxidation of biogenic amines such as norepinephrin and serotonin. Provides Cu(2+) ions for the ascorbate-mediated deaminase degradation of the heparan sulfate chains of GPC1. Has glutathione peroxidase-like activity, can remove both hydrogen peroxide and lipid hydroperoxide in the presence of thiols. Also shows NO-oxidase and NO2 synthase activities that determine endocrine NO homeostasis. This Homo sapiens (Human) protein is Ceruloplasmin.